The sequence spans 1295 residues: Phosphoribosylformylglycinamidine synthase (1295 aa).

The disordered stretch occupies residues 302–327; that stretch reads APFSGAATGSGGEIRDEGATGRGSKP. Residues 306–317 and alanine 677 each bind ATP; that span reads GAATGSGGEIRD. 4 residues coordinate Mg(2+): aspartate 678, glutamate 717, asparagine 721, and aspartate 884. Serine 886 contributes to the ATP binding site. Residues 1042-1295 enclose the Glutamine amidotransferase type-1 domain; that stretch reads MAILREQGVN…MFRNARVYLG (254 aa). Cysteine 1135 serves as the catalytic Nucleophile. Catalysis depends on residues histidine 1260 and glutamate 1262.

This sequence in the N-terminal section; belongs to the FGAMS family. In terms of assembly, monomer.

It is found in the cytoplasm. It catalyses the reaction N(2)-formyl-N(1)-(5-phospho-beta-D-ribosyl)glycinamide + L-glutamine + ATP + H2O = 2-formamido-N(1)-(5-O-phospho-beta-D-ribosyl)acetamidine + L-glutamate + ADP + phosphate + H(+). It functions in the pathway purine metabolism; IMP biosynthesis via de novo pathway; 5-amino-1-(5-phospho-D-ribosyl)imidazole from N(2)-formyl-N(1)-(5-phospho-D-ribosyl)glycinamide: step 1/2. Its function is as follows. Phosphoribosylformylglycinamidine synthase involved in the purines biosynthetic pathway. Catalyzes the ATP-dependent conversion of formylglycinamide ribonucleotide (FGAR) and glutamine to yield formylglycinamidine ribonucleotide (FGAM) and glutamate. The protein is Phosphoribosylformylglycinamidine synthase of Pseudoalteromonas atlantica (strain T6c / ATCC BAA-1087).